Consider the following 126-residue polypeptide: MSVPTLSNKPENVDLLVLPHGEEKVKCQISDKGDCNIFTIKLEDHTIGNLIKQSLCQDPKVTFAAYRQPHPLQNAIEITIRPKGYAGVKLLSDNVHSILNQVSTLRETFANRVQKYKEKNAYHGNR.

The protein belongs to the archaeal Rpo11/eukaryotic RPB11/RPC19 RNA polymerase subunit family. As to quaternary structure, component of the RNA polymerase II (Pol II) complex consisting of 12 subunits.

The protein localises to the nucleus. In terms of biological role, DNA-dependent RNA polymerase catalyzes the transcription of DNA into RNA using the four ribonucleoside triphosphates as substrates. Component of RNA polymerase II which synthesizes mRNA precursors and many functional non-coding RNAs. Pol II is the central component of the basal RNA polymerase II transcription machinery. It is composed of mobile elements that move relative to each other. RPB11 is part of the core element with the central large cleft. The chain is Probable DNA-directed RNA polymerase II subunit RPB11 from Plasmodium chabaudi chabaudi.